Consider the following 46-residue polypeptide: Mu-segestritoxin-Sf1d (46 aa).

4 cysteine pairs are disulfide-bonded: Cys-3–Cys-19, Cys-10–Cys-22, Cys-18–Cys-42, and Cys-24–Cys-40. The tract at residues 31–33 is keys region for toxin activity; sequence RPW.

This sequence belongs to the neurotoxin 16 (SFI) family. In terms of tissue distribution, expressed by the venom gland.

It localises to the secreted. In terms of biological role, insecticidal toxin. It inhibits insect voltage-gated sodium channels (Nav) by partially blocking the channel pore in DUM neurons from the American cockroach, not by acting as a gating modifier. The inhibition is only partially reversible after prolonged washout. In vivo, the toxin causes flaccid paralysis followed by death when injected into Heliothis virescens larvae. It also causes uncoordinated movements followed by full paralysis to sheep blowflies (Lucilia cuprina). When the toxin is fused to snowdrop lectin, it is orally active against larvae of the tomato moth (Laconobia oleracea), the rice brown planthopper (Nilaparvata lugens), and the peach-potato aphid (Myzus persicae). This chain is Mu-segestritoxin-Sf1d, found in Segestria florentina (Tube-web spider).